We begin with the raw amino-acid sequence, 151 residues long: ALK and LTK ligand 2 (151 aa).

The first 25 residues, 1–25, serve as a signal peptide directing secretion; it reads MRVSGRPMLLALLLLLSTVGDRGRA. Cystine bridges form between Cys-112/Cys-148 and Cys-126/Cys-135.

This sequence belongs to the ALKAL family. Homodimer.

It is found in the secreted. The protein localises to the cell membrane. In terms of biological role, cytokine that acts as a physiological ligand for receptor tyrosine kinases LTK and ALK, leading to their activation. Cytokine-binding is sufficient to activate LTK. In contrast, ALKAL2-driven activation of ALK is coupled with heparin-binding to ALK. Stimulation of ALK signaling is involved in neural development and regulation of energy expenditure. In Mus musculus (Mouse), this protein is ALK and LTK ligand 2.